Reading from the N-terminus, the 519-residue chain is SMR domain-containing protein At5g58720 (519 aa).

Positions 1 to 15 (MKQKNQHKKKKKRSC) are enriched in basic residues. 2 disordered regions span residues 1–47 (MKQK…REIE) and 92–128 (ESGD…CSED). Basic and acidic residues predominate over residues 28-47 (GNKKDVEEERKDGEGKREIE). Low complexity predominate over residues 98–127 (STSSVASGSSGQETASTSEYGAGSSSSCSE). Residues 428–502 (IDLHGQHVKP…NRGTLLIKLD (75 aa)) enclose the Smr domain.

As to quaternary structure, interacts with PRL1.

The chain is SMR domain-containing protein At5g58720 from Arabidopsis thaliana (Mouse-ear cress).